A 461-amino-acid polypeptide reads, in one-letter code: MAHDQSSRYANLDLKESDLIAGGKHILVAYKMKPKAGYDYLATAAHFAAESSTGTNVEVSTTDDFTKGVDALVYFIDEATEDMRIAYPIELFDRNVIDGRFMIVSFLTLVIGNNQGMGDVEYGKMIDFYVPERAIQMFDGPATDISNLWRILGRPIKDGGYIAGTIIKPKLGLRPEPFAQAAYQFWLGGDFIKNDEPQGNQVFAPVKKVIPLVYDAMKRAQDETGEAKLFSMNITADDYHEMCARADFALEVFGPDADKLAFLVDGYVGGPGMVTTARRQYPNQYLHYHRAGHGAITSPSSKRGYTAFVLAKMSRLQGASGIHVGTMGYGKMEGEGDDRNIAYMIERDECQGPVYFQKWYGMKPTTPIISGGMNALRLPGFFENLGHGNVINTAGGGSYGHIDSPAAGAKSLRQAYECWKAGADPIEYAKEHKEFARAFESFPGDADKLFPGWRDKLGVHK.

Position 113 (asparagine 113) interacts with substrate. The Proton acceptor role is filled by lysine 168. Position 170 (lysine 170) interacts with substrate. Mg(2+) is bound by residues lysine 193, aspartate 195, and glutamate 196. Lysine 193 is subject to N6-carboxylysine. Histidine 289 (proton acceptor) is an active-site residue. 3 residues coordinate substrate: arginine 290, histidine 323, and serine 370.

It belongs to the RuBisCO large chain family. Type II subfamily. In terms of assembly, homodimer. Mg(2+) serves as cofactor.

The catalysed reaction is 2 (2R)-3-phosphoglycerate + 2 H(+) = D-ribulose 1,5-bisphosphate + CO2 + H2O. It carries out the reaction D-ribulose 1,5-bisphosphate + O2 = 2-phosphoglycolate + (2R)-3-phosphoglycerate + 2 H(+). In terms of biological role, ruBisCO catalyzes two reactions: the carboxylation of D-ribulose 1,5-bisphosphate, the primary event in carbon dioxide fixation, as well as the oxidative fragmentation of the pentose substrate. Both reactions occur simultaneously and in competition at the same active site. The sequence is that of Ribulose bisphosphate carboxylase from Thiomonas intermedia (strain K12) (Thiobacillus intermedius).